A 278-amino-acid chain; its full sequence is Phosphonates import ATP-binding protein PhnC 2 (278 aa).

Residues 5 to 253 (IRVDSLNKTF…FLNELYGAEG (249 aa)) enclose the ABC transporter domain. An ATP-binding site is contributed by 37 to 44 (GASGSGKS).

This sequence belongs to the ABC transporter superfamily. Phosphonates importer (TC 3.A.1.9.1) family. In terms of assembly, the complex is composed of two ATP-binding proteins (PhnC), two transmembrane proteins (PhnE) and a solute-binding protein (PhnD).

It is found in the cell inner membrane. The catalysed reaction is phosphonate(out) + ATP + H2O = phosphonate(in) + ADP + phosphate + H(+). Functionally, part of the ABC transporter complex PhnCDE involved in phosphonates import. Responsible for energy coupling to the transport system. In Pseudomonas aeruginosa (strain ATCC 15692 / DSM 22644 / CIP 104116 / JCM 14847 / LMG 12228 / 1C / PRS 101 / PAO1), this protein is Phosphonates import ATP-binding protein PhnC 2.